The chain runs to 408 residues: Imidazolonepropionase (408 aa).

Residues H73 and H75 each coordinate Fe(3+). Residues H73 and H75 each contribute to the Zn(2+) site. 4-imidazolone-5-propanoate-binding residues include R82, Y145, and H178. Y145 contributes to the N-formimidoyl-L-glutamate binding site. Residue H243 coordinates Fe(3+). A Zn(2+)-binding site is contributed by H243. A 4-imidazolone-5-propanoate-binding site is contributed by Q246. Residue D318 coordinates Fe(3+). D318 is a binding site for Zn(2+). N320 and G322 together coordinate N-formimidoyl-L-glutamate. Residue S323 participates in 4-imidazolone-5-propanoate binding.

The protein belongs to the metallo-dependent hydrolases superfamily. HutI family. Zn(2+) serves as cofactor. Fe(3+) is required as a cofactor.

Its subcellular location is the cytoplasm. The enzyme catalyses 4-imidazolone-5-propanoate + H2O = N-formimidoyl-L-glutamate. The protein operates within amino-acid degradation; L-histidine degradation into L-glutamate; N-formimidoyl-L-glutamate from L-histidine: step 3/3. Catalyzes the hydrolytic cleavage of the carbon-nitrogen bond in imidazolone-5-propanoate to yield N-formimidoyl-L-glutamate. It is the third step in the universal histidine degradation pathway. The chain is Imidazolonepropionase from Shewanella loihica (strain ATCC BAA-1088 / PV-4).